Consider the following 875-residue polypeptide: MFFTISTHKMSSIADRNDGSIFDGLVEEDDKDKAKRVSRNKSEKKRRDQFNVLIKELGSMLPGNARKMDKSTVLQKSIDFLRKHKEITAQSDASEIRQDWKPTFLSNEEFTQLMLEALDGFFLAIMTDGNIIYVSESVTPLLEHLPSDLVDQSVFNFIPEGEHSEIYKILSSHLLESDSLTPEYLKSKNQLEFCCHMLRGTIDPKEQPTYEYVKFIGNFKCLNNVPNSAHNGFEGTIQRSHRPSYEDKVCFIATVRLATPQFIKEMCTVEEPNEEFTSRHSLEWKFLFLDHRAPPIIGYLPFEVLGTSGYDYYHVDDLDNLAKCHEHLMQYGKGKSCYYRFLTKGQQWIWLQTHYYITYHQWNSRPEFIVCTHTVVSYAEVRAERRRELGIEESLPEIKADKSQDSGSDNHINTVSLKEALERFDTSPTPSASSRSSRKSSHTAVSDHSSTPTKMTVDTSTPPRQSLSAHEKSTQRRSSLSSQSLSSQSLGQPVTQPTMSQPATLQLQSSMSQPVFQFSAQLGAMQHLKDQLEQRTRMIEANIHRQQEELRKIQEQLQIVHGQGLQLSSGPCVPKIHRTDVTVPEMFLQQSTSGLNFSSVQLTSGNSSSVQQLAPGNMQGQVVQTNQTQSGMNTGHTSTPHMIQQQPLQSSASQHNQQNVLSGHGQQSSLAGQSQNTVSTPLYNTMVISQPTAGNVVQVPSSLPQNNNQNAAAVTTFTQDRQIRFSQGQQLVTKLVTAPVACGAVMVPSTMFMGQVVTAYPTFAAQQQQPQTLPVTQQQQQQQQQSQQDQQQQQQQLTAVQQPAQPQLTQHPQQFLQTSRLLHGNQSAQLILSAAFPLQQSTFTQSHHQQHQPQQQQLSRHRTDKMTDPSKAQPQ.

The short motif at 32-47 (DKAKRVSRNKSEKKRR) is the Nuclear localization signal element. A bHLH domain is found at 34–84 (AKRVSRNKSEKKRRDQFNVLIKELGSMLPGNARKMDKSTVLQKSIDFLRKH). A phosphoserine mark is found at Ser38 and Ser42. Residue Lys67 forms a Glycyl lysine isopeptide (Lys-Gly) (interchain with G-Cter in SUMO1) linkage. PAS domains are found at residues 107-177 (NEEF…LLES) and 262-332 (FIKE…MQYG). One can recognise a PAC domain in the interval 336-379 (SCYYRFLTKGQQWIWLQTHYYITYHQWNSRPEFIVCTHTVVSYA). A Phosphoserine modification is found at Ser408. The tract at residues 420–507 (ALERFDTSPT…TMSQPATLQL (88 aa)) is disordered. The residue at position 427 (Ser427) is a Phosphoserine; by GSK3-beta. Residues 447–468 (DHSSTPTKMTVDTSTPPRQSLS) are compositionally biased toward polar residues. Thr451 and Thr461 each carry phosphothreonine; by CDK5. Positions 476–490 (RRSSLSSQSLSSQSL) are enriched in low complexity. Positions 491–507 (GQPVTQPTMSQPATLQL) are enriched in polar residues. The implicated in the circadian rhythmicity stretch occupies residues 516 to 566 (FQFSAQLGAMQHLKDQLEQRTRMIEANIHRQQEELRKIQEQLQIVHGQGLQ). Disordered regions lie at residues 628–674 (TQSG…AGQS), 794–813 (QQQLTAVQQPAQPQLTQHPQ), and 842–875 (TFTQSHHQQHQPQQQQLSRHRTDKMTDPSKAQPQ). The span at 842–857 (TFTQSHHQQHQPQQQQ) shows a compositional bias: low complexity. Lys871 is covalently cross-linked (Glycyl lysine isopeptide (Lys-Gly) (interchain with G-Cter in SUMO1)).

Component of the circadian clock oscillator which includes the CRY proteins, CLOCK or NPAS2, BMAL1 or BMAL2, CSNK1D and/or CSNK1E, TIMELESS and the PER proteins. Forms a heterodimer with BMAL1. The CLOCK-BMAL1 heterodimer is required for E-box-dependent transactivation, for CLOCK nuclear translocation and degradation, and for phosphorylation of both CLOCK and BMAL1. Interaction with PER and CRY proteins requires translocation to the nucleus. Interaction of the CLOCK-BMAL1 heterodimer with PER or CRY inhibits transcription activation. Interacts with BMAL2. In terms of processing, ubiquitinated, leading to its proteasomal degradation. Post-translationally, O-glycosylated; contains O-GlcNAc. O-glycosylation by OGT prevents protein degradation by inhibiting ubiquitination. It also stabilizes the CLOCK-BMAL1 heterodimer thereby increasing CLOCK-BMAL1-mediated transcriptional activation of PER1/2/3 and CRY1/2. Phosphorylation is dependent on the CLOCK-BMAL1 heterodimer formation. Phosphorylation enhances the transcriptional activity, alters the subcellular localization and decreases the stability of the heterodimer by promoting its degradation. In terms of processing, sumoylation enhances its transcriptional activity and interaction with ESR1, resulting in up-regulation of ESR1 activity. Estrogen stimulates sumoylation. Desumoylation by SENP1 negatively regulates its transcriptional activity. Post-translationally, undergoes lysosome-mediated degradation in a time-dependent manner in the liver. Expressed in the retinal photoreceptor cells (at protein level). Isoform 1 is expressed in both the retina and pineal gland. Isoform 2 is expressed mainly in the pineal gland.

It is found in the cytoplasm. It localises to the nucleus. The protein localises to the cytosol. In terms of biological role, transcriptional activator which forms a core component of the circadian clock. The circadian clock, an internal time-keeping system, regulates various physiological processes through the generation of approximately 24 hour circadian rhythms in gene expression, which are translated into rhythms in metabolism and behavior. It is derived from the Latin roots 'circa' (about) and 'diem' (day) and acts as an important regulator of a wide array of physiological functions including metabolism, sleep, body temperature, blood pressure, endocrine, immune, cardiovascular, and renal function. Consists of two major components: the central clock, residing in the suprachiasmatic nucleus (SCN) of the brain, and the peripheral clocks that are present in nearly every tissue and organ system. Both the central and peripheral clocks can be reset by environmental cues, also known as Zeitgebers (German for 'timegivers'). The predominant Zeitgeber for the central clock is light, which is sensed by retina and signals directly to the SCN. The central clock entrains the peripheral clocks through neuronal and hormonal signals, body temperature and feeding-related cues, aligning all clocks with the external light/dark cycle. Circadian rhythms allow an organism to achieve temporal homeostasis with its environment at the molecular level by regulating gene expression to create a peak of protein expression once every 24 hours to control when a particular physiological process is most active with respect to the solar day. Transcription and translation of core clock components (CLOCK, NPAS2, BMAL1, BMAL2, PER1, PER2, PER3, CRY1 and CRY2) plays a critical role in rhythm generation, whereas delays imposed by post-translational modifications (PTMs) are important for determining the period (tau) of the rhythms (tau refers to the period of a rhythm and is the length, in time, of one complete cycle). A diurnal rhythm is synchronized with the day/night cycle, while the ultradian and infradian rhythms have a period shorter and longer than 24 hours, respectively. Disruptions in the circadian rhythms contribute to the pathology of cardiovascular diseases, cancer, metabolic syndromes and aging. A transcription/translation feedback loop (TTFL) forms the core of the molecular circadian clock mechanism. Transcription factors, CLOCK or NPAS2 and BMAL1 or BMAL2, form the positive limb of the feedback loop, act in the form of a heterodimer and activate the transcription of core clock genes and clock-controlled genes (involved in key metabolic processes), harboring E-box elements (5'-CACGTG-3') within their promoters. The core clock genes: PER1/2/3 and CRY1/2 which are transcriptional repressors form the negative limb of the feedback loop and interact with the CLOCK|NPAS2-BMAL1|BMAL2 heterodimer inhibiting its activity and thereby negatively regulating their own expression. This heterodimer also activates nuclear receptors NR1D1/2 and RORA/B/G, which form a second feedback loop and which activate and repress BMAL1 transcription, respectively. CLOCK regulates the circadian expression of AANAT in the retinal photoreceptor cells. The preferred binding motif for the CLOCK-BMAL1 heterodimer is 5'-CACGTGA-3', which contains a flanking adenine nucleotide at the 3-prime end of the canonical 6-nucleotide E-box sequence. CLOCK specifically binds to the half-site 5'-CAC-3', while BMAL1 binds to the half-site 5'-GTGA-3'. The sequence is that of Circadian locomoter output cycles protein kaput (CLOCK) from Gallus gallus (Chicken).